A 189-amino-acid polypeptide reads, in one-letter code: UPF0301 protein RP032 (189 aa).

Belongs to the UPF0301 (AlgH) family.

This is UPF0301 protein RP032 from Rickettsia prowazekii (strain Madrid E).